The primary structure comprises 384 residues: uncharacterized protein (384 aa).

Disordered regions lie at residues 133 to 257 and 297 to 368; these read RQNS…TNQD and ERTP…STAT. Over residues 143–157 the composition is skewed to low complexity; that stretch reads PSTSSEPEPQPSTSS. Residues 302–315 show a composition bias toward acidic residues; it reads DQTDITDDSADWSE. The segment covering 316–342 has biased composition (basic and acidic residues); that stretch reads GETRRPSHSEVGERRLSRENNSEDPNR. Residues 343–363 show a composition bias toward basic residues; the sequence is SRSRSRSRERRRRRPRVRPGR.

This is an uncharacterized protein from Gallid herpesvirus 2 (strain Chicken/Md5/ATCC VR-987) (GaHV-2).